Consider the following 205-residue polypeptide: Protein-L-isoaspartate O-methyltransferase (205 aa).

Residue Ser-56 is part of the active site.

It belongs to the methyltransferase superfamily. L-isoaspartyl/D-aspartyl protein methyltransferase family.

The protein resides in the cytoplasm. It catalyses the reaction [protein]-L-isoaspartate + S-adenosyl-L-methionine = [protein]-L-isoaspartate alpha-methyl ester + S-adenosyl-L-homocysteine. Catalyzes the methyl esterification of L-isoaspartyl residues in peptides and proteins that result from spontaneous decomposition of normal L-aspartyl and L-asparaginyl residues. It plays a role in the repair and/or degradation of damaged proteins. The sequence is that of Protein-L-isoaspartate O-methyltransferase from Aeromonas hydrophila subsp. hydrophila (strain ATCC 7966 / DSM 30187 / BCRC 13018 / CCUG 14551 / JCM 1027 / KCTC 2358 / NCIMB 9240 / NCTC 8049).